A 105-amino-acid chain; its full sequence is MLITTSEKLYGVEYETLDVVFGVTTHSKNIVKNIGAGLKNLVGGEIKAYTEMQQEARKIAMDRLKEEAKNIGADAIIAMRFDSGSISNDMQSVVAYGTAVKFKNQ.

Belongs to the UPF0145 family.

In Enterococcus faecalis (Streptococcus faecalis), this protein is UPF0145 protein.